Here is an 88-residue protein sequence, read N- to C-terminus: Small ribosomal subunit protein bS20 (88 aa).

The interval 1–36 (MANTSSAKKATRKIARRTAVNKSRRTQMRGSVRTVE) is disordered.

It belongs to the bacterial ribosomal protein bS20 family.

Binds directly to 16S ribosomal RNA. In Rhodopseudomonas palustris (strain HaA2), this protein is Small ribosomal subunit protein bS20.